The primary structure comprises 358 residues: Peptide chain release factor 1 (358 aa).

At Gln-233 the chain carries N5-methylglutamine.

This sequence belongs to the prokaryotic/mitochondrial release factor family. In terms of processing, methylated by PrmC. Methylation increases the termination efficiency of RF1.

It localises to the cytoplasm. In terms of biological role, peptide chain release factor 1 directs the termination of translation in response to the peptide chain termination codons UAG and UAA. This is Peptide chain release factor 1 from Listeria monocytogenes serotype 4b (strain CLIP80459).